The primary structure comprises 688 residues: Collagen alpha-2(IX) chain (688 aa).

Residues 1 to 22 form the signal peptide; that stretch reads MTAVPAPRSLFVLLQVLWLALA. The interval 26–162 is triple-helical region 4 (COL4); the sequence is GPPGEPGPPG…PGKPGRPGTI (137 aa). The tract at residues 26-171 is disordered; the sequence is GPPGEPGPPG…IQGLEGSADF (146 aa). Composition is skewed to pro residues over residues 28–42 and 105–126; these read PGEPGPPGPPGPPGV and LPGPPGLPGPGFAGPPGPPGPV. Residues 128–137 show a composition bias toward low complexity; it reads LPGEIGTPGP. The segment covering 138–156 has biased composition (pro residues); that stretch reads KGDPGPEGPSGPPGPPGKP. Proline 159 is modified (4-hydroxyproline). The nonhelical region 4 (NC4) stretch occupies residues 163-179; sequence QGLEGSADFLCPTNCPA. Serine 168 carries an O-linked (Xyl...) (glycosaminoglycan) serine glycan. Residues 180-518 form a triple-helical region 3 (COL3) region; sequence GVKGPQGLQG…PGRQGVVGRA (339 aa). A 5-hydroxylysine modification is found at lysine 182. Residue lysine 182 is glycosylated (O-linked (Gal...) hydroxylysine). Positions 183 to 517 are disordered; sequence GPQGLQGVKG…QPGRQGVVGR (335 aa). 2 stretches are compositionally biased toward low complexity: residues 289–314 and 392–412; these read PQGITGPKGITGPPGIDGKDGTPGIP and RGPVGQPGPQGRQGPKGEQGP. A compositionally biased stretch (gly residues) spans 435-444; sequence GPRGGVGDPG. Over residues 502–517 the composition is skewed to low complexity; the sequence is DRGVPGQPGRQGVVGR. The segment at 519-548 is nonhelical region 3 (NC3); the sequence is ASDQHIVDVVLKMIQEQLAEVAVSAKREAL. Residues 549–631 form a triple-helical region 2 (COL2) region; sequence GAAGMVGLPG…PGLPGRPGQA (83 aa). A disordered region spans residues 553–664; it reads MVGLPGPPGP…GPVGLPGFCE (112 aa). Basic and acidic residues predominate over residues 598–610; sequence KRGEKGDRGEMGH. The interval 632 to 633 is nonhelical region 2 (NC2); sequence IN. Residues 634–663 form a triple-helical region 1 (COL1) region; the sequence is GKDGDRGSPGAPGEAGRPGRPGPVGLPGFC. Residues 664-688 form a nonhelical region 1 (NC1) region; that stretch reads EPAACLGASAYTSARLTEPGSIKGP.

It belongs to the fibril-associated collagens with interrupted helices (FACIT) family. Heterotrimer of an alpha 1(IX), an alpha 2(IX) and an alpha 3(IX) chain. The chains are linked to each other by interchain disulfide bonds. Trimers are also cross-linked via hydroxylysines. Covalently linked to the telopeptides of type II collagen by lysine-derived cross-links. In terms of processing, prolines at the third position of the tripeptide repeating unit (G-X-Y) are hydroxylated in some or all of the chains.

The protein resides in the secreted. Its subcellular location is the extracellular space. It localises to the extracellular matrix. In terms of biological role, structural component of hyaline cartilage and vitreous of the eye. The sequence is that of Collagen alpha-2(IX) chain (Col9a2) from Mus musculus (Mouse).